Reading from the N-terminus, the 114-residue chain is UPF0145 protein YG5714_0873 (114 aa).

Belongs to the UPF0145 family.

This is UPF0145 protein YG5714_0873 from Saccharolobus islandicus (strain Y.G.57.14 / Yellowstone #1) (Sulfolobus islandicus).